The chain runs to 127 residues: Probable toxin y4kH (127 aa).

Belongs to the MbcT/ParT/Res family.

Functionally, probable toxic component of a type II toxin-antitoxin (TA) system. It is not known which gene encodes its antitoxin. The polypeptide is Probable toxin y4kH (Sinorhizobium fredii (strain NBRC 101917 / NGR234)).